The chain runs to 398 residues: Meiotically up-regulated gene 126 protein (398 aa).

Disordered stretches follow at residues 30–81 (EEME…QRHR) and 119–260 (FESD…NSNS). Polar residues-rich tracts occupy residues 119-135 (FESD…NFPT) and 183-199 (VQEN…QEPQ). Over residues 210–222 (QANQQETSSNQEE) the composition is skewed to low complexity. A compositionally biased stretch (basic and acidic residues) spans 224-236 (SFDRQETQDDKQK). Polar residues predominate over residues 248–260 (RNRNQATITNSNS). Transmembrane regions (helical) follow at residues 269–289 (IFVI…DLIE), 305–325 (IFLW…YLAL), 341–361 (GACF…CFLI), and 373–393 (LEIY…GAIY).

The protein localises to the membrane. In terms of biological role, has a role in meiosis. This chain is Meiotically up-regulated gene 126 protein (mug126), found in Schizosaccharomyces pombe (strain 972 / ATCC 24843) (Fission yeast).